The chain runs to 380 residues: Cytochrome b (380 aa).

4 helical membrane-spanning segments follow: residues 34-54 (FGSLLGICLATQILTGLLLAM), 78-99 (WLIRNLHANGASLFFICIYMHI), 114-134 (WNTGIILLLTLMATAFVGYVL), and 179-199 (FFALHFLLPFLIAGLTLIHLT). Histidine 84 and histidine 98 together coordinate heme b. The heme b site is built by histidine 183 and histidine 197. Histidine 202 serves as a coordination point for a ubiquinone. 4 helical membrane-spanning segments follow: residues 227 to 247 (LKDILGFMLMYLPLMTLALFT), 289 to 309 (LGGVLALAASVLILFLSPLLH), 321 to 341 (LSQSLFWLLVTNLLILTWVGS), and 348 to 368 (FIIIGQLASLSYFTTLLILLP).

The protein belongs to the cytochrome b family. As to quaternary structure, the cytochrome bc1 complex contains 11 subunits: 3 respiratory subunits (MT-CYB, CYC1 and UQCRFS1), 2 core proteins (UQCRC1 and UQCRC2) and 6 low-molecular weight proteins (UQCRH/QCR6, UQCRB/QCR7, UQCRQ/QCR8, UQCR10/QCR9, UQCR11/QCR10 and a cleavage product of UQCRFS1). This cytochrome bc1 complex then forms a dimer. The cofactor is heme b.

The protein localises to the mitochondrion inner membrane. In terms of biological role, component of the ubiquinol-cytochrome c reductase complex (complex III or cytochrome b-c1 complex) that is part of the mitochondrial respiratory chain. The b-c1 complex mediates electron transfer from ubiquinol to cytochrome c. Contributes to the generation of a proton gradient across the mitochondrial membrane that is then used for ATP synthesis. This chain is Cytochrome b (MT-CYB), found in Falco peregrinus (Peregrine falcon).